The primary structure comprises 341 residues: MAP3K12-binding inhibitory protein 1 (341 aa).

Serine 91 is modified (phosphoserine). Residues lysine 94, lysine 127, lysine 137, lysine 151, and lysine 233 each participate in a glycyl lysine isopeptide (Lys-Gly) (interchain with G-Cter in SUMO2) cross-link. The interval 170-341 (AEINENNVRE…EADSMAAHLP (172 aa)) is interaction with MAP3K12. The tract at residues 269 to 283 (IYQRIKKLEDKILEL) is leucine-zipper 1. Lysine 299 is modified (N6-acetyllysine; alternate). Residue lysine 299 forms a Glycyl lysine isopeptide (Lys-Gly) (interchain with G-Cter in SUMO2); alternate linkage. Residues lysine 302 and lysine 323 each participate in a glycyl lysine isopeptide (Lys-Gly) (interchain with G-Cter in SUMO2) cross-link. The segment at 312 to 327 (LAELDEKISALKRALL) is leucine-zipper 2.

Component of the ADA2A-containing complex (ATAC), composed of KAT14, KAT2A, TADA2L, TADA3L, ZZ3, MBIP, WDR5, YEATS2, CCDC101 and DR1. In the complex, it probably interacts directly with KAT2A, KAT14 and WDR5.

It is found in the nucleus. The protein resides in the cytoplasm. Its function is as follows. Inhibits the MAP3K12 activity to induce the activation of the JNK/SAPK pathway. Component of the ATAC complex, a complex with histone acetyltransferase activity on histones H3 and H4. The protein is MAP3K12-binding inhibitory protein 1 (Mbip) of Mus musculus (Mouse).